The chain runs to 112 residues: Mitochondrial import inner membrane translocase subunit TIM14-1 (112 aa).

Alanine 2 carries the N-acetylalanine modification. A helical transmembrane segment spans residues 7-23 (AGVAVAATALAGRYGIQ). The J domain occupies 53–112 (EAALILGVRESVAAEKVKEAHRKVMVANHPDAGGSHFLASKINEAKDVMLGKTKNSGSAF).

Belongs to the TIM14 family. In terms of assembly, probable component of the PAM complex at least composed of a mitochondrial HSP70 protein, TIMM44 and TIMM14. The complex interacts with the TIMM23 component of the TIM17:23 complex.

Its subcellular location is the mitochondrion. It localises to the mitochondrion inner membrane. Functionally, component of the PAM complex, a complex required for the translocation of transit peptide-containing proteins from the inner membrane into the mitochondrial matrix in an ATP-dependent manner. The sequence is that of Mitochondrial import inner membrane translocase subunit TIM14-1 (TIM14-1) from Arabidopsis thaliana (Mouse-ear cress).